Here is a 328-residue protein sequence, read N- to C-terminus: MGAAAGDGREEEGVMATDFFWSYTDEPHATRRREILAKHPQIKELFGPDPLAFLKIAAVVSLQLWTATLLRDASWVKILTVAYFFGSFLNHNLFLAIHELSHNLAFTTPSYNRWLGIFANLPIGVPMSITFQKYHLEHHRFQGVDGIDMDIPSQAEAHAVKNTLSKSVWVVFQLFFYALRPLFLKPKPPGLWEFTNLIIQIALDASMVYFFGWKSLAYLILSTFVGGGMHPMAGHFISEHYVFNPDQETYSYYGPLNLMTWHVGYHNEHHDFPRIPGTRLYKVREIAPEYYNNLKSYKSWSQVIYMYIMDQTVGPFSRMKRKAPKKDS.

A run of 3 helical transmembrane segments spans residues 50–70 (PLAFLKIAAVVSLQLWTATLL), 78–98 (ILTVAYFFGSFLNHNLFLAIH), and 114–134 (WLGIFANLPIGVPMSITFQKY). Residues 98-102 (HELSH) carry the Histidine box-1 motif. The short motif at 135–139 (HLEHH) is the Histidine box-2 element. The next 3 membrane-spanning stretches (helical) occupy residues 164 to 184 (LSKSVWVVFQLFFYALRPLFL), 192 to 212 (WEFTNLIIQIALDASMVYFFG), and 217 to 237 (AYLILSTFVGGGMHPMAGHFI). A Histidine box-3 motif is present at residues 266–270 (HNEHH).

It belongs to the fatty acid desaturase type 1 family. DEGS subfamily.

The protein resides in the endoplasmic reticulum membrane. It carries out the reaction an N-acylsphinganine + 2 Fe(II)-[cytochrome b5] + O2 + 2 H(+) = an N-acylsphing-4-enine + 2 Fe(III)-[cytochrome b5] + 2 H2O. Its function is as follows. Sphingolipid-delta-4-desaturase required for the biosynthesis of delta-4-unsaturated sphingolipids and derivatives. This Oryza sativa subsp. japonica (Rice) protein is Sphingolipid delta(4)-desaturase DES1-like.